Consider the following 566-residue polypeptide: Peroxisomal targeting signal receptor (566 aa).

A Glycyl cysteine thioester (Cys-Gly) (interchain with G-Cter in ubiquitin) cross-link involves residue Cys-5. The interval 6–28 (SVGSNPLAQLNKHAQQNPALRQV) is amphipathic helix 1 (AH1). Lys-17 participates in a covalent cross-link: Glycyl lysine isopeptide (Lys-Gly) (interchain with G-Cter in ubiquitin). The amphipathic helix 2 (AH2) stretch occupies residues 53–71 (RFQMDQFMNRSPGFSDGQL). A disordered region spans residues 88 to 159 (GLKKQDSGSS…IGRPMMHTGI (72 aa)). Polar residues predominate over residues 94–142 (SGSSNMSAGDTAQHSRSWGNEFNSRSPQQGLASRVNNVERISNTNSMSS). The short motif at 111–115 (WGNEF) is the WxxxF/Y motif 1 element. The segment at 145–151 (PGMSRIG) is amphipathic helix 3 (AH3). A WxxxF/Y motif 2 motif is present at residues 187-191 (WNEQF). The segment at 225–241 (FQEVWDKLQAETADNNL) is amphipathic helix 4 (AH4). Positions 248-252 (WEKDY) match the WxxxF/Y motif 3 motif. 5 TPR repeats span residues 277-311 (NPNAYEIGCILMENGAKLSEAALAFEAAVQEDPAH), 312-345 (VDAWLKLGLVQTQNEKEMNGISALEQCLSLDPTN), 416-449 (PEVQLGLGTLFYANEEFGKTIDCFRTALEVNPND), 451-483 (LMWNRLGASLANSNRSEEAIQAYHKALALKPSF), and 485-517 (RARYNLAISSMNIGCYKEAAESLLSALSMHEVE).

Belongs to the peroxisomal targeting signal receptor family. In terms of assembly, interacts (via WxxxF/Y and LVxEF motifs) with PEX14; promoting translocation through the PEX13-PEX14 docking complex. Post-translationally, monoubiquitinated at Cys-5 by PEX2 during PEX5 passage through the retrotranslocation channel: monoubiquitination acts as a signal for PEX5 extraction and is required for proper export from peroxisomes and recycling. When PEX5 recycling is compromised, polyubiquitinated at Lys-17 by PEX10 during its passage through the retrotranslocation channel, leading to its degradation.

It is found in the cytoplasm. The protein resides in the cytosol. The protein localises to the peroxisome matrix. Its function is as follows. Receptor that mediates peroxisomal import of proteins containing a C-terminal PTS1-type tripeptide peroxisomal targeting signal (SKL-type). Binds to cargo proteins containing a PTS1 peroxisomal targeting signal in the cytosol, and translocates them into the peroxisome matrix by passing through the PEX13-PEX14 docking complex along with cargo proteins. PEX5 receptor is then retrotranslocated into the cytosol, leading to release of bound cargo in the peroxisome matrix, and reset for a subsequent peroxisome import cycle. In Kluyveromyces lactis (strain ATCC 8585 / CBS 2359 / DSM 70799 / NBRC 1267 / NRRL Y-1140 / WM37) (Yeast), this protein is Peroxisomal targeting signal receptor (PEX5).